A 1213-amino-acid polypeptide reads, in one-letter code: DNA-directed RNA polymerase subunit beta' (1213 aa).

Zn(2+)-binding residues include Cys-60, Cys-62, Cys-75, and Cys-78. Positions 450, 452, and 454 each coordinate Mg(2+). Residues Cys-819, Cys-893, Cys-900, and Cys-903 each contribute to the Zn(2+) site.

This sequence belongs to the RNA polymerase beta' chain family. In terms of assembly, the RNAP catalytic core consists of 2 alpha, 1 beta, 1 beta' and 1 omega subunit. When a sigma factor is associated with the core the holoenzyme is formed, which can initiate transcription. Mg(2+) serves as cofactor. Zn(2+) is required as a cofactor.

The enzyme catalyses RNA(n) + a ribonucleoside 5'-triphosphate = RNA(n+1) + diphosphate. In terms of biological role, DNA-dependent RNA polymerase catalyzes the transcription of DNA into RNA using the four ribonucleoside triphosphates as substrates. This Streptococcus pyogenes serotype M1 protein is DNA-directed RNA polymerase subunit beta'.